The primary structure comprises 495 residues: UDP-N-acetylmuramate--L-alanine ligase (495 aa).

Residue 122–128 (GTHGKTT) coordinates ATP.

The protein belongs to the MurCDEF family.

The protein resides in the cytoplasm. It carries out the reaction UDP-N-acetyl-alpha-D-muramate + L-alanine + ATP = UDP-N-acetyl-alpha-D-muramoyl-L-alanine + ADP + phosphate + H(+). Its pathway is cell wall biogenesis; peptidoglycan biosynthesis. Its function is as follows. Cell wall formation. This is UDP-N-acetylmuramate--L-alanine ligase from Mycobacterium leprae (strain TN).